A 731-amino-acid polypeptide reads, in one-letter code: Anaphase-promoting complex subunit 2 (731 aa).

This sequence belongs to the cullin family. As to quaternary structure, the APC/C is probably composed of at least 12 subunits: apc-2, apc-10, apc-11, cdc-26, emb-1, emb-27, emb-30, mat-1, mat-2, mat-3, such-1 and gfi-3.

It participates in protein modification; protein ubiquitination. Functionally, probable component of the anaphase promoting complex/cyclosome (APC/C), a cell cycle-regulated ubiquitin ligase that controls progression through mitosis and the G1 phase of the cell cycle. The APC/C complex acts by mediating ubiquitination and subsequent degradation of target proteins. Developmental role in early embryogenesis and the metaphase to anaphase transition in meiosis and mitosis. This Caenorhabditis elegans protein is Anaphase-promoting complex subunit 2.